The chain runs to 69 residues: DNA gyrase inhibitor YacG (69 aa).

C13, C16, C32, and C36 together coordinate Zn(2+).

Belongs to the DNA gyrase inhibitor YacG family. As to quaternary structure, interacts with GyrB. Zn(2+) is required as a cofactor.

Its function is as follows. Inhibits all the catalytic activities of DNA gyrase by preventing its interaction with DNA. Acts by binding directly to the C-terminal domain of GyrB, which probably disrupts DNA binding by the gyrase. This Neisseria gonorrhoeae (strain ATCC 700825 / FA 1090) protein is DNA gyrase inhibitor YacG.